A 220-amino-acid polypeptide reads, in one-letter code: MAKNRFNQHWLHDHINDPYVKMAQREGYRARAAYKLKEIDEQDKLIRPGQVIVDLGATPGSWSQYARNKLAQGKKRDAEREGGIDGTIVALDILPMEPIADVHFLQGDFREDDVLHQLEEVLEGRAVDLVISDMAPNLSGVASADAARIEHLCDLALEFAQNHLKPDGALLVKCFHGSGYSQIVEKFKQQFKVVAPRKPKASRDKSSETFILGRQLKHPR.

The S-adenosyl-L-methionine site is built by Gly60, Trp62, Asp92, Asp108, and Asp133. Lys173 (proton acceptor) is an active-site residue. The tract at residues 198–220 is disordered; the sequence is KPKASRDKSSETFILGRQLKHPR.

This sequence belongs to the class I-like SAM-binding methyltransferase superfamily. RNA methyltransferase RlmE family.

Its subcellular location is the cytoplasm. The catalysed reaction is uridine(2552) in 23S rRNA + S-adenosyl-L-methionine = 2'-O-methyluridine(2552) in 23S rRNA + S-adenosyl-L-homocysteine + H(+). Specifically methylates the uridine in position 2552 of 23S rRNA at the 2'-O position of the ribose in the fully assembled 50S ribosomal subunit. The sequence is that of Ribosomal RNA large subunit methyltransferase E from Burkholderia cenocepacia (strain HI2424).